Consider the following 1279-residue polypeptide: Sterol regulatory element-binding protein cleavage-activating protein (1279 aa).

Topologically, residues 1 to 18 (MTLTERLREKISRAFYNH) are cytoplasmic. The chain crosses the membrane as a helical span at residues 19–39 (GLLCASYPIPIILFTGFCILA). The Lumenal segment spans residues 40–279 (CCYPLLKLPL…SLVHVHFKEE (240 aa)). A loop-1 region spans residues 46-284 (KLPLPGTGPV…HFKEEIGVAE (239 aa)). Residues 60–80 (PVKDYSPPPVDSDRKQGEPTE) are disordered. A glycan (N-linked (GlcNAc...) asparagine) is linked at Asn263. The chain crosses the membrane as a helical span at residues 280-300 (IGVAELIPLVTTYIILFAYIY). An SSD domain is found at 284-442 (ELIPLVTTYI…MLFFTTVLSI (159 aa)). Residues 301 to 312 (FSTRKIDMVKSK) lie on the Cytoplasmic side of the membrane. A helical transmembrane segment spans residues 313–333 (WGLALAAVVTVLSSLLMSVGL). The Lumenal portion of the chain corresponds to 334-344 (CTLFGLTPTLN). The helical transmembrane segment at 345–365 (GGEIFPYLVVVIGLENVLVLT) threads the bilayer. The Cytoplasmic portion of the chain corresponds to 366 to 401 (KSVVSTPVDLEVKLRIAQGLSSESWSIMKNMATELG). The helical transmembrane segment at 402–422 (IILIGYFTLVPAIQEFCLFAV) threads the bilayer. Residue Val423 is a topological domain, lumenal. Residues 424–444 (GLVSDFFLQMLFFTTVLSIDI) traverse the membrane as a helical segment. The Cytoplasmic portion of the chain corresponds to 445–518 (RRMELADLNK…FLARTRLAQR (74 aa)). Positions 447–452 (MELADL) match the ER export signal motif. Residues Lys454 and Lys466 each participate in a glycyl lysine isopeptide (Lys-Gly) (interchain with G-Cter in ubiquitin) cross-link. The helical transmembrane segment at 519–539 (LIMAGTVVWIGILVYTDPAGL) threads the bilayer. Residues 535–710 (DPAGLRNYLA…QAHGDVTLYK (176 aa)) are loop-7. Topologically, residues 540-709 (RNYLAAQVTE…VQAHGDVTLY (170 aa)) are lumenal. A disordered region spans residues 579–615 (IFPPDAPKLPENQTSPGESPERGGPAEVVHDSPVPEV). Asn590 and Asn641 each carry an N-linked (GlcNAc...) asparagine glycan. Residues 668–696 (EGRHPQDGRSAWPPPGPIPAGHWEAGPKG) form a disordered region. The helical transmembrane segment at 710-730 (KVAALGLATGIVLVLLLLCLY) threads the bilayer. The Cytoplasmic segment spans residues 731–1279 (RVLCPRNYGQ…YVPSVLEKLD (549 aa)). The segment at 731–1279 (RVLCPRNYGQ…YVPSVLEKLD (549 aa)) is interaction with SREBF2. The stretch at 771–811 (VLRGHLMDIECLASDGMLLVSCCLAGHVCVWDAQTGDCLTR) is one WD 1 repeat. The tract at residues 811-904 (RIPRPGRQRR…PRHRAVCGRS (94 aa)) is disordered. 3 positions are modified to phosphoserine: Ser822, Ser838, and Ser851. The segment covering 877–891 (IDTNFSAQPRSSQPT) has biased composition (polar residues). A phosphoserine mark is found at Ser907 and Ser937. Positions 931 to 962 (PALRPPSPGPVLSQAPEDEGGSPEKGSPSLAW) are disordered. 2 WD repeats span residues 952–1002 (SPEK…LCCS) and 1005–1042 (EVSS…ALSP). Arg1051 carries the post-translational modification Omega-N-methylarginine. 4 WD repeats span residues 1077–1114 (AHQK…CLFT), 1117–1155 (GHSG…RVSH), 1158–1195 (AHRG…KFYS), and 1197–1235 (QQDL…LLQT).

It belongs to the WD repeat SCAP family. Membrane region forms a homotetramer. Component of the SCAP-SREBP complex (composed of SCAP and SREBF1/SREBP1 or SREBF2/SREBP2); interacts with SREBF1/SREBP1 or SREBF2/SREBP2 through its C-terminal cytoplasmic domain. Forms a ternary complex with INSIG1 or INSIG2 through its transmembrane domains at high sterol concentrations. Interacts with PAQR3; the interaction anchors the SCAP-SREBP complex to the Golgi apparatus in low cholesterol conditions. Interacts with the SEC23-SEC24 complex in a SAR1-GTP-dependent manner through an ER export signal in its third cytoplasmic loop. Interacts with RNF139; the interaction inhibits the interaction of SCAP with SEC24B and hampering the ER to Golgi transport of the SCAP-SREBP complex. Interacts with SPRING1. Post-translationally, ubiquitinated at Lys-454 and Lys-466. RNF145 triggers ubiquitination of SCAP, likely inhibiting SCAP-SREBP complex transport to the Golgi apparatus and the subsequent processing/maturation of SREBF2/SREBP2.

The protein resides in the endoplasmic reticulum membrane. It localises to the golgi apparatus membrane. It is found in the cytoplasmic vesicle. Its subcellular location is the COPII-coated vesicle membrane. In terms of biological role, escort protein required for cholesterol as well as lipid homeostasis. Regulates export of the SCAP-SREBP complex from the endoplasmic reticulum to the Golgi upon low cholesterol, thereby regulating the processing of sterol regulatory element-binding proteins (SREBPs) SREBF1/SREBP1 and SREBF2/SREBP2. At high sterol concentrations, formation of a ternary complex with INSIG (INSIG1 or INSIG2) leads to mask the ER export signal in SCAP, promoting retention of the complex in the endoplasmic reticulum. Low sterol concentrations trigger release of INSIG, a conformational change in the SSD domain of SCAP, unmasking of the ER export signal, promoting recruitment into COPII-coated vesicles and transport of the SCAP-SREBP to the Golgi: in the Golgi, SREBPs are then processed, releasing the transcription factor fragment of SREBPs from the membrane, its import into the nucleus and up-regulation of LDLR, INSIG1 and the mevalonate pathway. Binds cholesterol via its SSD domain. The sequence is that of Sterol regulatory element-binding protein cleavage-activating protein from Homo sapiens (Human).